The primary structure comprises 309 residues: tRNA uridine(34) hydroxylase (309 aa).

The Rhodanese domain occupies 129-223; that stretch reads SEPGTIVIDT…YLEEVPAEQS (95 aa). Cysteine 183 functions as the Cysteine persulfide intermediate in the catalytic mechanism. The interval 288–309 is disordered; that stretch reads YAERQRQVELAQARGKRPHIGS.

The protein belongs to the TrhO family.

It catalyses the reaction uridine(34) in tRNA + AH2 + O2 = 5-hydroxyuridine(34) in tRNA + A + H2O. Its function is as follows. Catalyzes oxygen-dependent 5-hydroxyuridine (ho5U) modification at position 34 in tRNAs. In Mesorhizobium japonicum (strain LMG 29417 / CECT 9101 / MAFF 303099) (Mesorhizobium loti (strain MAFF 303099)), this protein is tRNA uridine(34) hydroxylase.